The following is a 493-amino-acid chain: Angiopoietin-related protein 2 (493 aa).

An N-terminal signal peptide occupies residues 1-19 (MRPLCMTYWWLGLLATVGA). 2 coiled-coil regions span residues 77–115 (EVHLENRVHKQELELLNNELLKQKRQIETLQQLVEVDGG) and 152–202 (ALEL…QLEE). 2 N-linked (GlcNAc...) asparagine glycosylation sites follow: Asn164 and Asn192. Residues 269–489 (DKPSGPWRDC…KVVMMIRPNP (221 aa)) enclose the Fibrinogen C-terminal domain. 2 cysteine pairs are disulfide-bonded: Cys278/Cys307 and Cys430/Cys443.

Widely expressed in heart, tongue, lung and skeletal muscle. Also found in lower levels in kidney, epididymis and testis.

It is found in the secreted. Induces sprouting in endothelial cells through an autocrine and paracrine action. This Mus musculus (Mouse) protein is Angiopoietin-related protein 2 (Angptl2).